A 350-amino-acid chain; its full sequence is Biotin synthase (350 aa).

In terms of domain architecture, Radical SAM core spans 63–281 (GDIELATLLS…IAVARITMPK (219 aa)). Positions 78, 82, and 85 each coordinate [4Fe-4S] cluster. Residues Cys122, Cys153, Cys213, and Arg285 each coordinate [2Fe-2S] cluster.

The protein belongs to the radical SAM superfamily. Biotin synthase family. Homodimer. [4Fe-4S] cluster is required as a cofactor. [2Fe-2S] cluster serves as cofactor.

It carries out the reaction (4R,5S)-dethiobiotin + (sulfur carrier)-SH + 2 reduced [2Fe-2S]-[ferredoxin] + 2 S-adenosyl-L-methionine = (sulfur carrier)-H + biotin + 2 5'-deoxyadenosine + 2 L-methionine + 2 oxidized [2Fe-2S]-[ferredoxin]. The protein operates within cofactor biosynthesis; biotin biosynthesis; biotin from 7,8-diaminononanoate: step 2/2. Its function is as follows. Catalyzes the conversion of dethiobiotin (DTB) to biotin by the insertion of a sulfur atom into dethiobiotin via a radical-based mechanism. The chain is Biotin synthase from Acidovorax sp. (strain JS42).